A 367-amino-acid chain; its full sequence is WAT1-related protein At3g28050 (367 aa).

10 consecutive transmembrane segments (helical) span residues 10–30, 40–60, 73–93, 103–123, 142–162, 179–199, 211–231, 246–266, 276–296, and 301–321; these read VLPV…NTLF, FHVF…PSLF, FSIL…NIMG, TLAS…AVVF, TVVS…VVIA, WILG…WYIV, FTVV…VTLF, IALV…NTIH, LFVA…GVIF, and LYIG…TVMW. 2 EamA domains span residues 25-153 and 195-319; these read GLNT…FIVT and LWYI…FYTV. A disordered region spans residues 338–367; sequence HEEANEADLDSPSGSQKAPLLESYKNDEHV.

The protein belongs to the drug/metabolite transporter (DMT) superfamily. Plant drug/metabolite exporter (P-DME) (TC 2.A.7.4) family.

The protein resides in the membrane. The protein is WAT1-related protein At3g28050 of Arabidopsis thaliana (Mouse-ear cress).